We begin with the raw amino-acid sequence, 566 residues long: Rho GTPase-activating protein gacH (566 aa).

4 disordered regions span residues 1–56, 65–84, 128–168, and 322–366; these read MSGV…SGAT, LLKQ…NNNK, SEDE…SAHS, and KPQV…NSKN. Residues 14–35 are compositionally biased toward low complexity; sequence SSTTATTTGSSKSSLNISKSVS. Residues 36–56 show a composition bias toward polar residues; the sequence is PTGNKAVSPMSSPNSLQSGAT. A compositionally biased stretch (low complexity) spans 65–83; that stretch reads LLKQQQQPNHSITTNNNNN. Over residues 130 to 141 the composition is skewed to acidic residues; that stretch reads DEYEDDEDEDEN. A compositionally biased stretch (low complexity) spans 142 to 160; it reads NNSVNNNSNNNSNNNNNNN. Polar residues predominate over residues 327–337; it reads KSPQSSGSLST. Residues 345-356 show a composition bias toward low complexity; sequence SSSLQRSRSVSQ. In terms of domain architecture, Rho-GAP spans 369 to 564; it reads GSLDTILEKE…LLIENYNLFY (196 aa).

The protein localises to the cytoplasm. Functionally, rho GTPase-activating protein involved in the signal transduction pathway. The protein is Rho GTPase-activating protein gacH (gacH) of Dictyostelium discoideum (Social amoeba).